We begin with the raw amino-acid sequence, 331 residues long: Ornithine lipid hydroxylase OlsE (331 aa).

5 helical membrane passes run 13 to 33 (VSSL…YFAF), 37 to 57 (MHLL…ALFE), 85 to 105 (GGVQ…ATVA), 120 to 140 (WPMA…LYMA), and 189 to 209 (LLGA…FIGL). Positions 126-260 (VVLGLVIAEF…LVIWDQLLGT (135 aa)) constitute a Fatty acid hydroxylase domain.

Belongs to the sterol desaturase family.

It localises to the cell inner membrane. It participates in lipid metabolism. Involved in the biosynthesis of ornithine lipids (OLs), which are phosphorus-free membrane lipids. Is responsible for the hydroxylation of OL within the ornithine moiety. In Rhizobium tropici, this protein is Ornithine lipid hydroxylase OlsE.